Reading from the N-terminus, the 236-residue chain is 2-C-methyl-D-erythritol 4-phosphate cytidylyltransferase (236 aa).

It belongs to the IspD/TarI cytidylyltransferase family. IspD subfamily.

It carries out the reaction 2-C-methyl-D-erythritol 4-phosphate + CTP + H(+) = 4-CDP-2-C-methyl-D-erythritol + diphosphate. Its pathway is isoprenoid biosynthesis; isopentenyl diphosphate biosynthesis via DXP pathway; isopentenyl diphosphate from 1-deoxy-D-xylulose 5-phosphate: step 2/6. Catalyzes the formation of 4-diphosphocytidyl-2-C-methyl-D-erythritol from CTP and 2-C-methyl-D-erythritol 4-phosphate (MEP). In Azoarcus sp. (strain BH72), this protein is 2-C-methyl-D-erythritol 4-phosphate cytidylyltransferase.